Here is a 253-residue protein sequence, read N- to C-terminus: Probable transcriptional regulatory protein Tery_2125 (253 aa).

It belongs to the TACO1 family.

The protein localises to the cytoplasm. This is Probable transcriptional regulatory protein Tery_2125 from Trichodesmium erythraeum (strain IMS101).